The following is a 278-amino-acid chain: MGRKVHPIGFRLGIIKDWSAKWHASDKGFAECLTEDLKLRKAIAKKYVDAAISQVDIERQSNKVTVSVRTARPGIVIGRGGQRVDEMRHFLEELIGKKVQLNIVEISQAELDAFLVARSVAEQIERRVAYRRAMKQAIFRSMQAGAKGIKVCASGRLGGVEIARREVMHEGRVPLHTLRADIDYGCTRAHTALGDIGIKVWVYRGDILPEAKEQSEPEVTEMAAVMADAPAAAVAEAKVADTVAKPKRVTKKAEAEASAEEKPKRAAKKAENITKEEE.

Residues 39–107 (LRKAIAKKYV…KVQLNIVEIS (69 aa)) enclose the KH type-2 domain. The segment at 244 to 278 (AKPKRVTKKAEAEASAEEKPKRAAKKAENITKEEE) is disordered. A compositionally biased stretch (basic and acidic residues) spans 251-278 (KKAEAEASAEEKPKRAAKKAENITKEEE).

This sequence belongs to the universal ribosomal protein uS3 family. Part of the 30S ribosomal subunit. Forms a tight complex with proteins S10 and S14.

Functionally, binds the lower part of the 30S subunit head. Binds mRNA in the 70S ribosome, positioning it for translation. This is Small ribosomal subunit protein uS3 from Dehalococcoides mccartyi (strain ATCC BAA-2266 / KCTC 15142 / 195) (Dehalococcoides ethenogenes (strain 195)).